A 340-amino-acid chain; its full sequence is L-threonine 3-dehydrogenase (340 aa).

Cysteine 38 provides a ligand contact to Zn(2+). Catalysis depends on charge relay system residues threonine 40 and histidine 43. Histidine 63, glutamate 64, cysteine 93, cysteine 96, cysteine 99, and cysteine 107 together coordinate Zn(2+). Residues isoleucine 175, aspartate 195, arginine 200, 261–263 (LGI), and 285–286 (IY) each bind NAD(+).

The protein belongs to the zinc-containing alcohol dehydrogenase family. Homotetramer. It depends on Zn(2+) as a cofactor.

It localises to the cytoplasm. It catalyses the reaction L-threonine + NAD(+) = (2S)-2-amino-3-oxobutanoate + NADH + H(+). It functions in the pathway amino-acid degradation; L-threonine degradation via oxydo-reductase pathway; glycine from L-threonine: step 1/2. In terms of biological role, catalyzes the NAD(+)-dependent oxidation of L-threonine to 2-amino-3-ketobutyrate. This is L-threonine 3-dehydrogenase from Xanthomonas campestris pv. campestris (strain ATCC 33913 / DSM 3586 / NCPPB 528 / LMG 568 / P 25).